Reading from the N-terminus, the 256-residue chain is 1-(5-phosphoribosyl)-5-[(5-phosphoribosylamino)methylideneamino] imidazole-4-carboxamide isomerase (256 aa).

Aspartate 8 (proton acceptor) is an active-site residue. Aspartate 130 acts as the Proton donor in catalysis.

The protein belongs to the HisA/HisF family.

The protein resides in the cytoplasm. It carries out the reaction 1-(5-phospho-beta-D-ribosyl)-5-[(5-phospho-beta-D-ribosylamino)methylideneamino]imidazole-4-carboxamide = 5-[(5-phospho-1-deoxy-D-ribulos-1-ylimino)methylamino]-1-(5-phospho-beta-D-ribosyl)imidazole-4-carboxamide. It functions in the pathway amino-acid biosynthesis; L-histidine biosynthesis; L-histidine from 5-phospho-alpha-D-ribose 1-diphosphate: step 4/9. The sequence is that of 1-(5-phosphoribosyl)-5-[(5-phosphoribosylamino)methylideneamino] imidazole-4-carboxamide isomerase from Chlorobium phaeovibrioides (strain DSM 265 / 1930) (Prosthecochloris vibrioformis (strain DSM 265)).